The chain runs to 218 residues: Phosphoribosylformylglycinamidine synthase subunit PurQ (218 aa).

Residues 2–218 (SIAVLRFPGT…GARMLRGLAC (217 aa)) enclose the Glutamine amidotransferase type-1 domain. Catalysis depends on Cys86, which acts as the Nucleophile. Catalysis depends on residues His195 and Glu197.

Part of the FGAM synthase complex composed of 1 PurL, 1 PurQ and 2 PurS subunits.

The protein localises to the cytoplasm. The enzyme catalyses N(2)-formyl-N(1)-(5-phospho-beta-D-ribosyl)glycinamide + L-glutamine + ATP + H2O = 2-formamido-N(1)-(5-O-phospho-beta-D-ribosyl)acetamidine + L-glutamate + ADP + phosphate + H(+). It carries out the reaction L-glutamine + H2O = L-glutamate + NH4(+). The protein operates within purine metabolism; IMP biosynthesis via de novo pathway; 5-amino-1-(5-phospho-D-ribosyl)imidazole from N(2)-formyl-N(1)-(5-phospho-D-ribosyl)glycinamide: step 1/2. Part of the phosphoribosylformylglycinamidine synthase complex involved in the purines biosynthetic pathway. Catalyzes the ATP-dependent conversion of formylglycinamide ribonucleotide (FGAR) and glutamine to yield formylglycinamidine ribonucleotide (FGAM) and glutamate. The FGAM synthase complex is composed of three subunits. PurQ produces an ammonia molecule by converting glutamine to glutamate. PurL transfers the ammonia molecule to FGAR to form FGAM in an ATP-dependent manner. PurS interacts with PurQ and PurL and is thought to assist in the transfer of the ammonia molecule from PurQ to PurL. In Wolinella succinogenes (strain ATCC 29543 / DSM 1740 / CCUG 13145 / JCM 31913 / LMG 7466 / NCTC 11488 / FDC 602W) (Vibrio succinogenes), this protein is Phosphoribosylformylglycinamidine synthase subunit PurQ.